The following is an 879-amino-acid chain: MTTETGPDSEVKKAQEETPQQPEAAAAVTTPVTPAGHSHPETNSNEKHLTQQDTRPAEQSLDMEEKDYCEADGLSERTTPSKAQKSPQKIAKKFKSATCRVTLLDASEYECEVEKHGRGQVLFDLVCEHLNLLEKDYFGLTFCDADSQKNWLDPSKEIKKQIRSSPWNFAFTVKFYPPDPAQLTEDITRYYLCLQLRADIITGRLPCSFVTHALLGSYAVQAELGDHDTEEHVGNYVSELRFAPNQTRELEERIMELHKTYRGMTPGEAEIHFLENAKKLSMYGVDLHHAKDSEGIDIMLGVCANGLLIYRDRLRINRFAWPKILKISYKRSNFYIKIRPGEYEQFESTIGFKLPNHRSAKRLWKVCIEHHTFFRLVSPEPPPKGFLVMGSKFRYSGRTQAQTRQASALIDRPAPFFERSSSKRYTMSRSLDGAEFSRPASVSENHDAGPDGDKREDDAESGGRRSEAEEGEVRTPTKIKELKPEQETTPRHKQEFLDKPEDVLLKHQASINELKRTLKEPNSKLIHRDRDWERERRLPSSPASPSPKGTPEKASERAGLREGSEEKVKPPRPRAPESDTGDEDQDQERDAVFLKDNHLAIERKCSSITVSSTSSLEAEVDFTVIGDYHGGAFEDFSRSLPELDRDKSDSETEGLVFARDLKGPSSQEDESGGIEDSPDRGACSTPELPQFESVKAETMTVSSLAIRKKIEPEAMLQSRVSTADSTQVDGGAPAAKDFMTTPPCITTETISTTMENSLKSGKGAAAMIPGPQTVATEIRSLSPIIGKDVLTSTYGATAETLSTSTTTHVTKTVKGGFSETRIEKRIIITGDEDVDQDQALALAIKEAKLQHPDMLVTKAVVYRETDPSPEERDKKPQES.

The tract at residues 1-64 (MTTETGPDSE…RPAEQSLDME (64 aa)) is disordered. Over residues 17-35 (ETPQQPEAAAAVTTPVTPA) the composition is skewed to low complexity. Phosphothreonine is present on Thr30. The span at 38–50 (SHPETNSNEKHLT) shows a compositional bias: basic and acidic residues. Ser75 is modified (phosphoserine). Position 79 is a phosphothreonine (Thr79). Residues 97–378 (ATCRVTLLDA…EHHTFFRLVS (282 aa)) form the FERM domain. Phosphotyrosine is present on Tyr343. Phosphoserine occurs at positions 378, 430, 437, 461, and 466. The disordered stretch occupies residues 428-501 (SRSLDGAEFS…HKQEFLDKPE (74 aa)). Basic and acidic residues predominate over residues 444-501 (ENHDAGPDGDKREDDAESGGRRSEAEEGEVRTPTKIKELKPEQETTPRHKQEFLDKPE). Thr475 bears the Phosphothreonine mark. Residues 483-541 (KPEQETTPRHKQEFLDKPEDVLLKHQASINELKRTLKEPNSKLIHRDRDWERERRLPSS) form a spectrin--actin-binding region. Residue Ser510 is modified to Phosphoserine. Positions 514–538 (LKRTLKEPNSKLIHRDRDWERERRL) are enriched in basic and acidic residues. Disordered stretches follow at residues 514 to 596 (LKRT…FLKD), 633 to 687 (FEDF…STPE), and 718 to 742 (SRVS…MTTP). Phosphoserine is present on residues Ser540, Ser541, Ser544, and Ser546. Thr550 is subject to Phosphothreonine. Over residues 550 to 577 (TPEKASERAGLREGSEEKVKPPRPRAPE) the composition is skewed to basic and acidic residues. Phosphoserine occurs at positions 564 and 578. Thr580 bears the Phosphothreonine mark. 11 positions are modified to phosphoserine: Glu583, Gln587, Ser639, Ser648, Ser650, Ser665, Ser666, Asp669, Ser671, Ser677, and Ser684. Positions 635–650 (DFSRSLPELDRDKSDS) are enriched in basic and acidic residues. Thr685 carries the post-translational modification Phosphothreonine. Positions 718-728 (SRVSTADSTQV) are enriched in polar residues. A phosphoserine mark is found at Ser721, Pro742, Ala766, Ser782, and Ser868. The C-terminal (CTD) stretch occupies residues 744 to 879 (CITTETISTT…EERDKKPQES (136 aa)).

Interacts with AGAP2. In terms of tissue distribution, highest expression in brain, lower in heart and kidney. Within the brain, highest expression in cerebellum.

The protein localises to the cytoplasm. The protein resides in the cytoskeleton. May function to confer stability and plasticity to neuronal membrane via multiple interactions, including the spectrin-actin-based cytoskeleton, integral membrane channels and membrane-associated guanylate kinases. The chain is Band 4.1-like protein 1 from Rattus norvegicus (Rat).